Here is an 862-residue protein sequence, read N- to C-terminus: Eukaryotic translation initiation factor 3 subunit C (862 aa).

Over residues 1 to 10 (MSRFFYGGGS) the composition is skewed to gly residues. The segment at 1–81 (MSRFFYGGGS…DEEKTTVVKS (81 aa)) is disordered. Positions 16-52 (SSDEEELYERDEEEQSEEEESSEEEETSEEGSDDEEG) are enriched in acidic residues. Residues 601–775 (FHMHINLELL…GAIVFRKGVE (175 aa)) enclose the PCI domain. Residues 814-862 (RDQGAGARGGRGGGRGGHARGGARFPGQQGRRPGGQQFGGGALGGAIKA) are disordered. The segment covering 819–833 (GARGGRGGGRGGHAR) has biased composition (gly residues). Over residues 835 to 844 (GARFPGQQGR) the composition is skewed to low complexity. A compositionally biased stretch (gly residues) spans 845–862 (RPGGQQFGGGALGGAIKA).

Belongs to the eIF-3 subunit C family. In terms of assembly, component of the eukaryotic translation initiation factor 3 (eIF-3) complex.

It is found in the cytoplasm. In terms of biological role, component of the eukaryotic translation initiation factor 3 (eIF-3) complex, which is involved in protein synthesis of a specialized repertoire of mRNAs and, together with other initiation factors, stimulates binding of mRNA and methionyl-tRNAi to the 40S ribosome. The eIF-3 complex specifically targets and initiates translation of a subset of mRNAs involved in cell proliferation. The chain is Eukaryotic translation initiation factor 3 subunit C (nip1) from Aspergillus clavatus (strain ATCC 1007 / CBS 513.65 / DSM 816 / NCTC 3887 / NRRL 1 / QM 1276 / 107).